Here is a 556-residue protein sequence, read N- to C-terminus: Genetic interactor of prohibitins 3, mitochondrial (556 aa).

The transit peptide at methionine 1 to lysine 21 directs the protein to the mitochondrion. A CP-type G domain is found at glutamate 113–serine 305.

The protein belongs to the TRAFAC class YlqF/YawG GTPase family. GEP3 subfamily.

The protein localises to the mitochondrion. Its function is as follows. Interacts genetically with prohibitins and thus may be involved in the mitochondrial lipid metabolism. The sequence is that of Genetic interactor of prohibitins 3, mitochondrial (GEP3) from Saccharomyces cerevisiae (strain YJM789) (Baker's yeast).